We begin with the raw amino-acid sequence, 82 residues long: Three-finger toxin MicTx3 (82 aa).

Residues 1–21 (MKTLLLTLVVVTIMCLDLGYT) form the signal peptide. 4 cysteine pairs are disulfide-bonded: Cys24/Cys44, Cys38/Cys59, Cys63/Cys74, and Cys75/Cys80.

This sequence belongs to the three-finger toxin family. Short-chain subfamily. Expressed by the venom gland.

It localises to the secreted. Functionally, has been described to inhibit nicotinic acetylcholine receptor (nAChR) alpha-7/CHRNA7 subunits and to bind acetylcholine binding protein (AChBP) (Kd=29.5 nM). The chain is Three-finger toxin MicTx3 from Micrurus corallinus (Brazilian coral snake).